The chain runs to 281 residues: Putative phosphatase MPN_264 (281 aa).

Asp-8 (nucleophile) is an active-site residue. Asp-8 serves as a coordination point for Mg(2+). A phosphate-binding site is contributed by Leu-9. Asp-10 is a Mg(2+) binding site. Phosphate-binding positions include 44–45 (TG) and Lys-205. Positions 228 and 229 each coordinate Mg(2+). Residue Asn-231 participates in phosphate binding.

The protein belongs to the HAD-like hydrolase superfamily. Cof family. The cofactor is Mg(2+).

The polypeptide is Putative phosphatase MPN_264 (Mycoplasma pneumoniae (strain ATCC 29342 / M129 / Subtype 1) (Mycoplasmoides pneumoniae)).